Consider the following 1098-residue polypeptide: Probable arabinosyltransferase B (1098 aa).

12 helical membrane-spanning segments follow: residues 28 to 50 (WVATIAGLIGFVLSVATPLLPVV), 217 to 239 (LKLLAIIGAIVATVVALIALWRL), 271 to 293 (ASWRTFTLTDAVVIFGFLLWHVI), 402 to 419 (LRPEGIIALGSLVTYVLI), 434 to 456 (AVVTAAFTLGVQPTGLIAVAALV), 472 to 494 (LVGTLPLVSPMLAAGTVILTVVF), 541 to 558 (FGFLITALCLFTAVFIML), 570 to 587 (PAWRLMGVIFGTMFFLMF), 597 to 619 (GLFAAVGAAMAALTTVLVSPSVL), 626 to 648 (MAFLAALFFLLALCWATTNGWWY), 663 to 685 (IDGITVSTIFFALFAIAAGYAAW), and 698 to 720 (LIRALTTAPVPIVAGFMAAVFVA).

Belongs to the emb family.

The protein localises to the cell membrane. Its function is as follows. Arabinosyl transferase responsible for the polymerization of arabinose into the arabinan of arabinogalactan. This chain is Probable arabinosyltransferase B (embB), found in Mycobacterium tuberculosis (strain CDC 1551 / Oshkosh).